Reading from the N-terminus, the 141-residue chain is High mobility group B protein 3 (141 aa).

Basic and acidic residues-rich tracts occupy residues Met1–Ser12 and Gly70–Gly110. Disordered regions lie at residues Met1–Ser40 and Lys54–Asp141. Positions Pro35–Asn104 form a DNA-binding region, HMG box. Ser122 carries the post-translational modification Phosphoserine. Residues Val124–Asp141 are compositionally biased toward acidic residues.

This sequence belongs to the HMGB family. In terms of tissue distribution, expressed in lateral roots, root tips, stems, cotyledons, leaves and flowers (excluding ovary and pedicels).

The protein resides in the nucleus. Its subcellular location is the cytoplasm. The protein localises to the cytosol. In terms of biological role, binds preferentially double-stranded DNA. In Arabidopsis thaliana (Mouse-ear cress), this protein is High mobility group B protein 3 (HMGB3).